Consider the following 601-residue polypeptide: Elongation factor 4 (601 aa).

Residues 6 to 188 (NRIRNFCIIA…QVVTKIAPPK (183 aa)) form the tr-type G domain. Residues 18–23 (DHGKST) and 135–138 (NKID) each bind GTP.

It belongs to the TRAFAC class translation factor GTPase superfamily. Classic translation factor GTPase family. LepA subfamily.

The protein localises to the cell membrane. The enzyme catalyses GTP + H2O = GDP + phosphate + H(+). Required for accurate and efficient protein synthesis under certain stress conditions. May act as a fidelity factor of the translation reaction, by catalyzing a one-codon backward translocation of tRNAs on improperly translocated ribosomes. Back-translocation proceeds from a post-translocation (POST) complex to a pre-translocation (PRE) complex, thus giving elongation factor G a second chance to translocate the tRNAs correctly. Binds to ribosomes in a GTP-dependent manner. This Desulforamulus reducens (strain ATCC BAA-1160 / DSM 100696 / MI-1) (Desulfotomaculum reducens) protein is Elongation factor 4.